Here is a 397-residue protein sequence, read N- to C-terminus: Chorismate synthase (397 aa).

Positions 40 and 46 each coordinate NADP(+). Residues R129–S131, Q257–A258, G302, K317–T321, and R343 each bind FMN.

It belongs to the chorismate synthase family. In terms of assembly, homotetramer. FMNH2 serves as cofactor.

The enzyme catalyses 5-O-(1-carboxyvinyl)-3-phosphoshikimate = chorismate + phosphate. It functions in the pathway metabolic intermediate biosynthesis; chorismate biosynthesis; chorismate from D-erythrose 4-phosphate and phosphoenolpyruvate: step 7/7. Its function is as follows. Catalyzes the anti-1,4-elimination of the C-3 phosphate and the C-6 proR hydrogen from 5-enolpyruvylshikimate-3-phosphate (EPSP) to yield chorismate, which is the branch point compound that serves as the starting substrate for the three terminal pathways of aromatic amino acid biosynthesis. This reaction introduces a second double bond into the aromatic ring system. The protein is Chorismate synthase of Chlorobium phaeobacteroides (strain BS1).